Here is a 226-residue protein sequence, read N- to C-terminus: Putative 5'-nucleotidase alr3139 (226 aa).

A divalent metal cation-binding residues include Asp8, Asp9, Ser38, and Asn89.

Belongs to the SurE nucleotidase family. A divalent metal cation is required as a cofactor.

It localises to the cytoplasm. The catalysed reaction is a ribonucleoside 5'-phosphate + H2O = a ribonucleoside + phosphate. Functionally, nucleotidase that shows phosphatase activity on nucleoside 5'-monophosphates. This chain is Putative 5'-nucleotidase alr3139, found in Nostoc sp. (strain PCC 7120 / SAG 25.82 / UTEX 2576).